The sequence spans 179 residues: ATP-dependent protease subunit HslV (179 aa).

The active site involves T6. S164, C167, and T170 together coordinate Na(+).

It belongs to the peptidase T1B family. HslV subfamily. In terms of assembly, a double ring-shaped homohexamer of HslV is capped on each side by a ring-shaped HslU homohexamer. The assembly of the HslU/HslV complex is dependent on binding of ATP.

The protein resides in the cytoplasm. It carries out the reaction ATP-dependent cleavage of peptide bonds with broad specificity.. With respect to regulation, allosterically activated by HslU binding. Protease subunit of a proteasome-like degradation complex believed to be a general protein degrading machinery. This Listeria monocytogenes serotype 4b (strain CLIP80459) protein is ATP-dependent protease subunit HslV.